Reading from the N-terminus, the 89-residue chain is Small ribosomal subunit protein uS15 (89 aa).

It belongs to the universal ribosomal protein uS15 family. As to quaternary structure, part of the 30S ribosomal subunit. Forms a bridge to the 50S subunit in the 70S ribosome, contacting the 23S rRNA.

Functionally, one of the primary rRNA binding proteins, it binds directly to 16S rRNA where it helps nucleate assembly of the platform of the 30S subunit by binding and bridging several RNA helices of the 16S rRNA. In terms of biological role, forms an intersubunit bridge (bridge B4) with the 23S rRNA of the 50S subunit in the ribosome. In Lacticaseibacillus casei (strain BL23) (Lactobacillus casei), this protein is Small ribosomal subunit protein uS15.